A 478-amino-acid polypeptide reads, in one-letter code: Putative multidrug resistance outer membrane protein MdtQ (478 aa).

Residues 1 to 21 (MNRDSFYPAIACFPLLLMLAG) form the signal peptide. Residue cysteine 22 is the site of N-palmitoyl cysteine attachment. Cysteine 22 is lipidated: S-diacylglycerol cysteine.

This sequence belongs to the outer membrane factor (OMF) (TC 1.B.17) family.

The protein resides in the cell outer membrane. Could be involved in resistance to puromycin, acriflavine and tetraphenylarsonium chloride. The polypeptide is Putative multidrug resistance outer membrane protein MdtQ (mdtQ) (Escherichia coli (strain K12)).